The following is a 432-amino-acid chain: Pentatricopeptide repeat-containing protein 2, mitochondrial (432 aa).

A mitochondrion-targeting transit peptide spans 1–33 (MQFIKRTFPRRAFVDLLLNRFCLREFATTYSVS). PPR repeat units follow at residues 108–142 (KTVAYNLVLQYHLAKGHYNAAWSLYNDMKKRQQKP), 143–179 (SDHTYSILLKGFCDAIEKNKQGNFSKLREYSEKVTAS), 360–394 (NLQVYHEKLRNLVQQGQAAECLNTIKRMSHNGPFP), and 395–429 (TQQTFLIVLSLCKRPKFYSYTKSFLDLAKKLNVPV).

It is found in the mitochondrion. Its function is as follows. Mitochondrial RNA-binding protein that acts as a general translation factor. Plays a critical role in the synthesis of all mitochondrial DNA-encoded oxidative phosphorylation subunits, which are essential for mitochondrial respiration. Essential for the expression of iron-sulfur cluster (ISC) proteins as well as other heme proteins related to iron-sensing, and thus plays a key role in iron homeostasis. The polypeptide is Pentatricopeptide repeat-containing protein 2, mitochondrial (Schizosaccharomyces pombe (strain 972 / ATCC 24843) (Fission yeast)).